A 424-amino-acid chain; its full sequence is Double homeobox protein 4-like protein 2 (424 aa).

The segment covering Met1–Thr10 has biased composition (polar residues). Disordered regions lie at residues Met1–Leu24, Ser72–Thr102, Arg148–Ala167, Leu218–Pro362, and Gln388–Glu414. DNA-binding regions (homeobox) lie at residues Gly19–His78 and Gly94–Gly153. Over residues Lys265 to Arg274 the composition is skewed to basic and acidic residues. Composition is skewed to low complexity over residues Pro278 to Pro302 and Ala319 to Ala329.

It localises to the nucleus. Its function is as follows. May be involved in transcriptional regulation. The chain is Double homeobox protein 4-like protein 2 (DUX4L2) from Homo sapiens (Human).